A 105-amino-acid chain; its full sequence is Large ribosomal subunit protein uL24 (105 aa).

The protein belongs to the universal ribosomal protein uL24 family. As to quaternary structure, part of the 50S ribosomal subunit.

One of two assembly initiator proteins, it binds directly to the 5'-end of the 23S rRNA, where it nucleates assembly of the 50S subunit. In terms of biological role, one of the proteins that surrounds the polypeptide exit tunnel on the outside of the subunit. The chain is Large ribosomal subunit protein uL24 from Beijerinckia indica subsp. indica (strain ATCC 9039 / DSM 1715 / NCIMB 8712).